The chain runs to 124 residues: Large ribosomal subunit protein bL12 (124 aa).

This sequence belongs to the bacterial ribosomal protein bL12 family. As to quaternary structure, homodimer. Part of the ribosomal stalk of the 50S ribosomal subunit. Forms a multimeric L10(L12)X complex, where L10 forms an elongated spine to which 2 to 4 L12 dimers bind in a sequential fashion. Binds GTP-bound translation factors.

Functionally, forms part of the ribosomal stalk which helps the ribosome interact with GTP-bound translation factors. Is thus essential for accurate translation. This is Large ribosomal subunit protein bL12 from Janthinobacterium sp. (strain Marseille) (Minibacterium massiliensis).